The following is a 298-amino-acid chain: HTH-type transcriptional regulator ArgP (298 aa).

The region spanning 4-60 (LDYRWIEALDSVVSKGSFERAAEQLFISQSAVSQRIKQLEKYLAQPVLIREQPPRPT) is the HTH lysR-type domain. A DNA-binding region (H-T-H motif) is located at residues 21–40 (FERAAEQLFISQSAVSQRIK).

The protein belongs to the LysR transcriptional regulatory family. As to quaternary structure, homodimer.

Its function is as follows. Controls the transcription of genes involved in arginine and lysine metabolism. The sequence is that of HTH-type transcriptional regulator ArgP from Vibrio cholerae serotype O1 (strain ATCC 39541 / Classical Ogawa 395 / O395).